The primary structure comprises 555 residues: 2-isopropylmalate synthase (555 aa).

Positions 30 to 303 (PIWCSVDLRD…DPGLDCTDIN (274 aa)) constitute a Pyruvate carboxyltransferase domain. 4 residues coordinate Mg(2+): Asp39, His242, His244, and Asn278. The tract at residues 437-555 (QPDARIKFVD…VSAANRVIAK (119 aa)) is regulatory domain.

Belongs to the alpha-IPM synthase/homocitrate synthase family. LeuA type 2 subfamily. In terms of assembly, homodimer. Mg(2+) is required as a cofactor.

The protein resides in the cytoplasm. It catalyses the reaction 3-methyl-2-oxobutanoate + acetyl-CoA + H2O = (2S)-2-isopropylmalate + CoA + H(+). It participates in amino-acid biosynthesis; L-leucine biosynthesis; L-leucine from 3-methyl-2-oxobutanoate: step 1/4. Functionally, catalyzes the condensation of the acetyl group of acetyl-CoA with 3-methyl-2-oxobutanoate (2-ketoisovalerate) to form 3-carboxy-3-hydroxy-4-methylpentanoate (2-isopropylmalate). The chain is 2-isopropylmalate synthase from Brucella suis biovar 1 (strain 1330).